A 232-amino-acid polypeptide reads, in one-letter code: Large ribosomal subunit protein uL1 (232 aa).

It belongs to the universal ribosomal protein uL1 family. As to quaternary structure, part of the 50S ribosomal subunit.

Functionally, binds directly to 23S rRNA. The L1 stalk is quite mobile in the ribosome, and is involved in E site tRNA release. Protein L1 is also a translational repressor protein, it controls the translation of the L11 operon by binding to its mRNA. The polypeptide is Large ribosomal subunit protein uL1 (Coxiella burnetii (strain CbuK_Q154) (Coxiella burnetii (strain Q154))).